The following is a 666-amino-acid chain: Transketolase (666 aa).

His26 is a binding site for substrate. Thiamine diphosphate-binding positions include His66 and 114–116 (GPL). Asp155 contacts Mg(2+). Thiamine diphosphate is bound by residues Gly156 and Asn185. Asn185 and Ile187 together coordinate Mg(2+). Positions 261, 358, and 385 each coordinate substrate. Position 261 (His261) interacts with thiamine diphosphate. Glu411 acts as the Proton donor in catalysis. Thiamine diphosphate is bound at residue Phe437. Positions 461, 469, and 520 each coordinate substrate.

This sequence belongs to the transketolase family. As to quaternary structure, homodimer. Mg(2+) serves as cofactor. It depends on Ca(2+) as a cofactor. Requires Mn(2+) as cofactor. The cofactor is Co(2+). Thiamine diphosphate is required as a cofactor.

It carries out the reaction D-sedoheptulose 7-phosphate + D-glyceraldehyde 3-phosphate = aldehydo-D-ribose 5-phosphate + D-xylulose 5-phosphate. In terms of biological role, catalyzes the transfer of a two-carbon ketol group from a ketose donor to an aldose acceptor, via a covalent intermediate with the cofactor thiamine pyrophosphate. This Buchnera aphidicola subsp. Baizongia pistaciae (strain Bp) protein is Transketolase (tkt).